Reading from the N-terminus, the 412-residue chain is Sexual development regulator umv3 (412 aa).

Residues 1–197 (MSAQDDIDTG…PPLLSDLPRH (197 aa)) are disordered. Polar residues-rich tracts occupy residues 73-93 (RANT…SASS) and 149-170 (RQSA…PGST). Residues 171–181 (ENERVRMHDQR) are compositionally biased toward basic and acidic residues. Residues 195–388 (PRHSTDNKTY…ARQGIQVPVR (194 aa)) enclose the Velvet domain.

The protein belongs to the velvet family. VelC subfamily.

It is found in the nucleus. In terms of biological role, velvet-domain-containing protein not required for disease or sexual development on seedlings. This Mycosarcoma maydis (Corn smut fungus) protein is Sexual development regulator umv3.